Here is a 75-residue protein sequence, read N- to C-terminus: Small ribosomal subunit protein bS18 (75 aa).

This sequence belongs to the bacterial ribosomal protein bS18 family. Part of the 30S ribosomal subunit. Forms a tight heterodimer with protein bS6.

Binds as a heterodimer with protein bS6 to the central domain of the 16S rRNA, where it helps stabilize the platform of the 30S subunit. This Baumannia cicadellinicola subsp. Homalodisca coagulata protein is Small ribosomal subunit protein bS18.